A 195-amino-acid polypeptide reads, in one-letter code: NADH-ubiquinone oxidoreductase subunit 9 (195 aa).

Belongs to the complex I 30 kDa subunit family. As to quaternary structure, complex I is composed of about 30 different subunits.

Its subcellular location is the mitochondrion inner membrane. It carries out the reaction a ubiquinone + NADH + 5 H(+)(in) = a ubiquinol + NAD(+) + 4 H(+)(out). Core subunit of the mitochondrial membrane respiratory chain NADH dehydrogenase (Complex I) that is believed to belong to the minimal assembly required for catalysis. Complex I functions in the transfer of electrons from NADH to the respiratory chain. The immediate electron acceptor for the enzyme is believed to be ubiquinone. In Acanthamoeba castellanii (Amoeba), this protein is NADH-ubiquinone oxidoreductase subunit 9 (NAD9).